The primary structure comprises 1205 residues: Centrosome and spindle pole associated protein 1 (1205 aa).

Coiled coils occupy residues 12 to 34 (QKAK…EMKG) and 87 to 108 (KLKE…TQAK). Residues 16–37 (LAKDKAELESDPPYMEMKGKAS) are disordered. Over residues 158–173 (STEKVRQVEKNIEPKS) the composition is skewed to basic and acidic residues. Disordered regions lie at residues 158–187 (STEK…KSDL), 222–277 (SRRP…PGVS), and 380–467 (QQKK…GSTL). Over residues 176 to 187 (NKNPISQGKSDL) the composition is skewed to polar residues. Basic and acidic residues-rich tracts occupy residues 222–233 (SRRPLKQTKEEV) and 257–275 (ANGE…RDPG). Residues 357–391 (EDRELTKRRKEKYRQELLEQIAEQQKKKRREKDLA) adopt a coiled-coil conformation. Composition is skewed to basic and acidic residues over residues 401-410 (DPEKSPDRLK) and 417-428 (RHFEEMPPERPR). Residue serine 405 is modified to Phosphoserine. A compositionally biased stretch (pro residues) spans 433 to 447 (TPPPPFSAPSSPSVP). A coiled-coil region spans residues 574-618 (STQSLQSYQEALQEQIREREARRKKERLEKEEYEAKLEAEMRIYN). The disordered stretch occupies residues 677-704 (AENLEDSANKNSGPLQTQSSPFARGNTF). Residues 685 to 697 (NKNSGPLQTQSSP) show a composition bias toward polar residues. Residues 724–813 (RFQIEEKRQR…EKHNLQLQHY (90 aa)) are a coiled coil. 2 positions are modified to phosphoserine: serine 850 and serine 869. The segment at 862-881 (SSMSRAQSPPVPARKNQLRA) is disordered. The stretch at 874–911 (ARKNQLRAEEEKKNVIMELSEMRKQLRSEERRLQGRLL) forms a coiled coil. Phosphoserine is present on serine 915. Positions 993 to 1014 (QQQALLREQQKRLNRIKMRRDA) form a coiled coil. Disordered stretches follow at residues 1086 to 1105 (GLDF…SLKS), 1124 to 1169 (RLTE…RPGT), and 1182 to 1205 (NEEQ…AAHA). Over residues 1124–1134 (RLTEQQKKPTN) the composition is skewed to basic and acidic residues. Over residues 1135 to 1145 (TDDEGSLVDPD) the composition is skewed to acidic residues. Positions 1146–1156 (DIMRHLSDDGR) are enriched in basic and acidic residues.

In terms of assembly, interacts with PLEKHG6. Interacts with ARMC9, TOGARAM1, CCDC66, CEP104 and CEP290. Phosphorylated. Phosphorylation increases in colcemide-treated cells.

It is found in the cytoplasm. The protein localises to the cytoskeleton. Its subcellular location is the microtubule organizing center. The protein resides in the centrosome. It localises to the spindle. It is found in the spindle pole. The protein localises to the cell projection. Its subcellular location is the cilium. In terms of biological role, may play a role in cell-cycle-dependent microtubule organization. This chain is Centrosome and spindle pole associated protein 1 (Cspp1), found in Mus musculus (Mouse).